A 299-amino-acid polypeptide reads, in one-letter code: Methionyl-tRNA formyltransferase (299 aa).

A (6S)-5,6,7,8-tetrahydrofolate-binding site is contributed by 109 to 112; sequence SLLP.

Belongs to the Fmt family.

The catalysed reaction is L-methionyl-tRNA(fMet) + (6R)-10-formyltetrahydrofolate = N-formyl-L-methionyl-tRNA(fMet) + (6S)-5,6,7,8-tetrahydrofolate + H(+). Attaches a formyl group to the free amino group of methionyl-tRNA(fMet). The formyl group appears to play a dual role in the initiator identity of N-formylmethionyl-tRNA by promoting its recognition by IF2 and preventing the misappropriation of this tRNA by the elongation apparatus. This chain is Methionyl-tRNA formyltransferase, found in Dinoroseobacter shibae (strain DSM 16493 / NCIMB 14021 / DFL 12).